The following is a 44-amino-acid chain: uncharacterized protein (44 aa).

A helical membrane pass occupies residues 6 to 26 (SILIRGGGGVLIVLILLLWIV).

It localises to the membrane. This is an uncharacterized protein from Ornithodoros (relapsing fever ticks).